Reading from the N-terminus, the 360-residue chain is MLGRLRTVVKASSSNSIRNYLGYTSGVQKKTVTVIPGDGIGPEITSSVMGVFQAAKVPIEWEIFDISGGQPISQELIASITRNKVALKGPLYTEILSGSQSRNMELRKALDLYAHVVPCKQIPGITARHDDVLVDFVVIRENTQGEYSGLEQVLTPGVVQSLKIITKEASERIARYAFEYAKANGRKKVTAVHKANIQKQTDGLFLATCTQIAKEYPEIKFENTIIDNCCMQLVKSPEQYDVMVTPNLYGNIVSNIGAALVGGPGLAGGANVGEGSIIFEMGAHHVAADIAGKDKANPTGLLLASVMMLKHLGLNEHATKVENAVKAVIKEGTLTSDIGGKSSTKQFTGAVIDYIEKNQN.

A mitochondrion-targeting transit peptide spans 1–113; the sequence is MLGRLRTVVK…MELRKALDLY (113 aa). Serine 101, asparagine 103, arginine 107, and arginine 140 together coordinate substrate. Aspartate 227 contributes to the Mg(2+) binding site. NADP(+) contacts are provided by residues 284–290 and asparagine 297; that span reads HHVAADI.

This sequence belongs to the isocitrate and isopropylmalate dehydrogenases family. In terms of assembly, heterooligomer of catalytic and regulatory subunits. Mg(2+) is required as a cofactor. It depends on Mn(2+) as a cofactor.

It localises to the mitochondrion. It carries out the reaction D-threo-isocitrate + NAD(+) = 2-oxoglutarate + CO2 + NADH. Its function is as follows. Performs an essential role in the oxidative function of the citric acid cycle. This Dictyostelium discoideum (Social amoeba) protein is Isocitrate dehydrogenase [NAD] regulatory subunit B, mitochondrial (idhB).